The sequence spans 439 residues: Tryptophan synthase beta chain 2 (439 aa).

Lysine 99 carries the N6-(pyridoxal phosphate)lysine modification.

The protein belongs to the TrpB family. In terms of assembly, tetramer of two alpha and two beta chains. Pyridoxal 5'-phosphate serves as cofactor.

The enzyme catalyses (1S,2R)-1-C-(indol-3-yl)glycerol 3-phosphate + L-serine = D-glyceraldehyde 3-phosphate + L-tryptophan + H2O. It participates in amino-acid biosynthesis; L-tryptophan biosynthesis; L-tryptophan from chorismate: step 5/5. Functionally, the beta subunit is responsible for the synthesis of L-tryptophan from indole and L-serine. The sequence is that of Tryptophan synthase beta chain 2 (trpB2) from Corynebacterium efficiens (strain DSM 44549 / YS-314 / AJ 12310 / JCM 11189 / NBRC 100395).